A 391-amino-acid chain; its full sequence is DNA replication and repair protein RecF (391 aa).

30-37 (GLNGQGKT) is a binding site for ATP.

Belongs to the RecF family.

It is found in the cytoplasm. Its function is as follows. The RecF protein is involved in DNA metabolism; it is required for DNA replication and normal SOS inducibility. RecF binds preferentially to single-stranded, linear DNA. It also seems to bind ATP. This chain is DNA replication and repair protein RecF, found in Kineococcus radiotolerans (strain ATCC BAA-149 / DSM 14245 / SRS30216).